Here is a 295-residue protein sequence, read N- to C-terminus: Tyrosine recombinase XerC (295 aa).

The Core-binding (CB) domain maps to 1–85 (MQNALQKYYD…ALRQFLAYLV (85 aa)). The region spanning 106–285 (YLPKNIDQEQ…DFKHLTDVYD (180 aa)) is the Tyr recombinase domain. Active-site residues include Arg145, Lys169, His237, Arg240, and His263. Tyr272 acts as the O-(3'-phospho-DNA)-tyrosine intermediate in catalysis.

It belongs to the 'phage' integrase family. XerC subfamily. Forms a cyclic heterotetrameric complex composed of two molecules of XerC and two molecules of XerD.

It is found in the cytoplasm. In terms of biological role, site-specific tyrosine recombinase, which acts by catalyzing the cutting and rejoining of the recombining DNA molecules. The XerC-XerD complex is essential to convert dimers of the bacterial chromosome into monomers to permit their segregation at cell division. It also contributes to the segregational stability of plasmids. In Actinobacillus succinogenes (strain ATCC 55618 / DSM 22257 / CCUG 43843 / 130Z), this protein is Tyrosine recombinase XerC.